The chain runs to 354 residues: Uroporphyrinogen decarboxylase (354 aa).

Substrate-binding positions include Arg27–Arg31, Asp77, Tyr154, Ser209, and His327.

The protein belongs to the uroporphyrinogen decarboxylase family. Homodimer.

It localises to the cytoplasm. It catalyses the reaction uroporphyrinogen III + 4 H(+) = coproporphyrinogen III + 4 CO2. It participates in porphyrin-containing compound metabolism; protoporphyrin-IX biosynthesis; coproporphyrinogen-III from 5-aminolevulinate: step 4/4. Its function is as follows. Catalyzes the decarboxylation of four acetate groups of uroporphyrinogen-III to yield coproporphyrinogen-III. This is Uroporphyrinogen decarboxylase from Shewanella frigidimarina (strain NCIMB 400).